Here is a 491-residue protein sequence, read N- to C-terminus: Trigger factor (491 aa).

The PPIase FKBP-type domain maps to 169–254 (GDRVTIDYLG…VKDVAAAAPI (86 aa)). Residues 433 to 491 (KTVSKDELMAEDEAEDKPAKKAPAKKKAAAKAEAGEGEEAAAPKKKAPAKKKAADDSAE) are disordered. Residues 452 to 461 (KKAPAKKKAA) show a composition bias toward basic residues.

The protein belongs to the FKBP-type PPIase family. Tig subfamily.

It is found in the cytoplasm. It carries out the reaction [protein]-peptidylproline (omega=180) = [protein]-peptidylproline (omega=0). Its function is as follows. Involved in protein export. Acts as a chaperone by maintaining the newly synthesized protein in an open conformation. Functions as a peptidyl-prolyl cis-trans isomerase. The protein is Trigger factor of Sinorhizobium fredii (strain NBRC 101917 / NGR234).